We begin with the raw amino-acid sequence, 307 residues long: Protein YIF1A (307 aa).

The interval 1-42 (MNFQQQGYRATKPRARASPPTGGPMLFDDTSSGPPPMNNQNY) is disordered. Topologically, residues 1–148 (MNFQQQGYRA…TPRHDVNAPD (148 aa)) are cytoplasmic. The chain crosses the membrane as a helical span at residues 149–169 (LYIPTMAFITYILLAGMALGI). The Lumenal segment spans residues 170–184 (QKRFSPEVLGLCAST). Residues 185-205 (ALVWMIIEVLVMLLSLYLLTV) traverse the membrane as a helical segment. At 206–213 (HTDLSTFD) the chain is on the cytoplasmic side. Residues 214 to 236 (LVAYSGYKYVGMILTVFCGLLFG) traverse the membrane as a helical segment. The Lumenal segment spans residues 237–239 (SDG). Residues 240–259 (YYVALAWSSCALMFFIVRSL) form a helical membrane-spanning segment. Residues 260–285 (KMKILSSISADSMGAGASAKPRFRLY) are Cytoplasmic-facing. The helical transmembrane segment at 286–306 (ITVASAAFQPFIIYWLTAHLV) threads the bilayer.

The protein belongs to the YIF1 family.

It localises to the endoplasmic reticulum membrane. The protein resides in the golgi apparatus membrane. Its subcellular location is the endoplasmic reticulum-Golgi intermediate compartment membrane. Possible role in transport between endoplasmic reticulum and Golgi. This is Protein YIF1A (yif1a) from Danio rerio (Zebrafish).